The chain runs to 122 residues: Large ribosomal subunit protein uL14 (122 aa).

Belongs to the universal ribosomal protein uL14 family. Part of the 50S ribosomal subunit. Forms a cluster with proteins L3 and L19. In the 70S ribosome, L14 and L19 interact and together make contacts with the 16S rRNA in bridges B5 and B8.

In terms of biological role, binds to 23S rRNA. Forms part of two intersubunit bridges in the 70S ribosome. In Kocuria rhizophila (strain ATCC 9341 / DSM 348 / NBRC 103217 / DC2201), this protein is Large ribosomal subunit protein uL14.